A 46-amino-acid chain; its full sequence is Large ribosomal subunit protein bL36 (46 aa).

It belongs to the bacterial ribosomal protein bL36 family.

The polypeptide is Large ribosomal subunit protein bL36 (Klebsiella pneumoniae (strain 342)).